The primary structure comprises 159 residues: 2-C-methyl-D-erythritol 2,4-cyclodiphosphate synthase (159 aa).

D11 and H13 together coordinate a divalent metal cation. 4-CDP-2-C-methyl-D-erythritol 2-phosphate-binding positions include 11–13 (DVH) and 37–38 (HS). H45 provides a ligand contact to a divalent metal cation. 4-CDP-2-C-methyl-D-erythritol 2-phosphate contacts are provided by residues 59 to 61 (DIG) and 64 to 68 (FPDSD).

Belongs to the IspF family. As to quaternary structure, homotrimer. A divalent metal cation serves as cofactor.

The enzyme catalyses 4-CDP-2-C-methyl-D-erythritol 2-phosphate = 2-C-methyl-D-erythritol 2,4-cyclic diphosphate + CMP. The protein operates within isoprenoid biosynthesis; isopentenyl diphosphate biosynthesis via DXP pathway; isopentenyl diphosphate from 1-deoxy-D-xylulose 5-phosphate: step 4/6. Functionally, involved in the biosynthesis of isopentenyl diphosphate (IPP) and dimethylallyl diphosphate (DMAPP), two major building blocks of isoprenoid compounds. Catalyzes the conversion of 4-diphosphocytidyl-2-C-methyl-D-erythritol 2-phosphate (CDP-ME2P) to 2-C-methyl-D-erythritol 2,4-cyclodiphosphate (ME-CPP) with a corresponding release of cytidine 5-monophosphate (CMP). The protein is 2-C-methyl-D-erythritol 2,4-cyclodiphosphate synthase of Solibacter usitatus (strain Ellin6076).